The following is a 193-amino-acid chain: Probable 3' cyclic ADP-D-ribose synthase ThsB' (193 aa).

Homodimer.

It carries out the reaction NAD(+) = 3'cADPR + nicotinamide + H(+). Functionally, TIR-like domain-containing component of the Thoeris antiviral defense system, composed of ThsA and ThsB and ThsB'. In the presence of NAD(+) produces a signaling molecule that activates cognate ThsA (AC J8G6Z1) to hydrolyze NAD(+). The signaling molecule is a cyclic ADP-D-ribose isomer and may be 3' cyclic ADP-D-ribose (3'cADPR); it is not 2'cADPR. The sequence is that of Probable 3' cyclic ADP-D-ribose synthase ThsB' from Bacillus cereus (strain MSX-D12).